Reading from the N-terminus, the 199-residue chain is Acireductone dioxygenase 3 (199 aa).

Residues histidine 99, histidine 101, glutamate 105, and histidine 144 each contribute to the Fe(2+) site. Residues histidine 99, histidine 101, glutamate 105, and histidine 144 each coordinate Ni(2+).

This sequence belongs to the acireductone dioxygenase (ARD) family. The cofactor is Fe(2+). It depends on Ni(2+) as a cofactor.

It is found in the cytoplasm. The protein localises to the nucleus. It catalyses the reaction 1,2-dihydroxy-5-(methylsulfanyl)pent-1-en-3-one + O2 = 4-methylsulfanyl-2-oxobutanoate + formate + 2 H(+). The enzyme catalyses 1,2-dihydroxy-5-(methylsulfanyl)pent-1-en-3-one + O2 = 3-(methylsulfanyl)propanoate + CO + formate + 2 H(+). Its pathway is amino-acid biosynthesis; L-methionine biosynthesis via salvage pathway; L-methionine from S-methyl-5-thio-alpha-D-ribose 1-phosphate: step 5/6. Catalyzes 2 different reactions between oxygen and the acireductone 1,2-dihydroxy-3-keto-5-methylthiopentene (DHK-MTPene) depending upon the metal bound in the active site. Fe-containing acireductone dioxygenase (Fe-ARD) produces formate and 2-keto-4-methylthiobutyrate (KMTB), the alpha-ketoacid precursor of methionine in the methionine recycle pathway. Ni-containing acireductone dioxygenase (Ni-ARD) produces methylthiopropionate, carbon monoxide and formate, and does not lie on the methionine recycle pathway. In Arabidopsis thaliana (Mouse-ear cress), this protein is Acireductone dioxygenase 3 (ARD3).